Reading from the N-terminus, the 345-residue chain is uncharacterized protein (345 aa).

This sequence belongs to the cycloisomerase 2 family.

This is an uncharacterized protein from Staphylococcus saprophyticus subsp. saprophyticus (strain ATCC 15305 / DSM 20229 / NCIMB 8711 / NCTC 7292 / S-41).